The chain runs to 354 residues: Guanine nucleotide-binding protein G(o) subunit alpha (354 aa).

Gly2 is lipidated: N-myristoyl glycine. Residue Cys3 is the site of S-palmitoyl cysteine attachment. The 323-residue stretch at 32–354 folds into the G-alpha domain; it reads KDVKLLLLGA…ANNLRGCGLY (323 aa). The tract at residues 35–48 is G1 motif; the sequence is KLLLLGAGESGKST. Positions 43, 46, 47, 48, 152, 176, 177, 178, and 179 each coordinate GTP. Ser47 contacts Mg(2+). Residues 174-182 form a G2 motif region; it reads DILRTRVKT. Arg179 carries the post-translational modification ADP-ribosylarginine; by cholera toxin. Thr182 is a Mg(2+) binding site. Positions 197 to 206 are G3 motif; sequence FRLFDVGGQR. Position 205 is a 5-glutamyl histamine (Gln205). The interval 266–273 is G4 motif; sequence ILFLNKKD. GTP-binding residues include Asn270, Asp273, and Cys325. The tract at residues 324–329 is G5 motif; it reads TCATDT. The S-palmitoyl cysteine moiety is linked to residue Cys351. ADP-ribosylcysteine; by pertussis toxin is present on Cys351.

The protein belongs to the G-alpha family. G(i/o/t/z) subfamily. As to quaternary structure, g proteins are composed of 3 units; alpha, beta and gamma. The alpha chain contains the guanine nucleotide binding site. Forms a complex with GNB1 and GNG3. Interacts with RGS14. Interacts with RGS16. Interacts with RGS19. Interacts (when palmitoylated) with ADGRG3. In terms of processing, histaminylated at Gln-205 residues by TGM2. Post-translationally, palmitoylated at Cys-351, leading to binding to ADGRG3.

The protein resides in the cell membrane. It localises to the membrane. It catalyses the reaction GTP + H2O = GDP + phosphate + H(+). With respect to regulation, the GTPase activity is promoted by GTPAse activators, such as RGS14, RGS16 and RGS19. In terms of biological role, guanine nucleotide-binding proteins (G proteins) function as transducers downstream of G protein-coupled receptors (GPCRs) in numerous signaling cascades. The alpha chain contains the guanine nucleotide binding site and alternates between an active, GTP-bound state and an inactive, GDP-bound state. Signaling by an activated GPCR promotes GDP release and GTP binding. The alpha subunit has a low GTPase activity that converts bound GTP to GDP, thereby terminating the signal. Both GDP release and GTP hydrolysis are modulated by numerous regulatory proteins. Signaling is mediated via effector proteins, such as adenylate cyclase. Inhibits adenylate cyclase activity, leading to decreased intracellular cAMP levels. This is Guanine nucleotide-binding protein G(o) subunit alpha (GNAO1) from Homo sapiens (Human).